The chain runs to 272 residues: Shikimate dehydrogenase (NADP(+)) (272 aa).

Residues 14–16 (SKS) and threonine 61 each bind shikimate. Lysine 65 serves as the catalytic Proton acceptor. Glutamate 77 contacts NADP(+). Positions 86 and 102 each coordinate shikimate. Residues 126–130 (GAGGA), 149–154 (NRTVSR), and methionine 213 each bind NADP(+). Residue tyrosine 215 participates in shikimate binding. Glycine 237 contacts NADP(+).

Belongs to the shikimate dehydrogenase family. As to quaternary structure, homodimer.

It carries out the reaction shikimate + NADP(+) = 3-dehydroshikimate + NADPH + H(+). The protein operates within metabolic intermediate biosynthesis; chorismate biosynthesis; chorismate from D-erythrose 4-phosphate and phosphoenolpyruvate: step 4/7. Involved in the biosynthesis of the chorismate, which leads to the biosynthesis of aromatic amino acids. Catalyzes the reversible NADPH linked reduction of 3-dehydroshikimate (DHSA) to yield shikimate (SA). The protein is Shikimate dehydrogenase (NADP(+)) of Escherichia coli O6:K15:H31 (strain 536 / UPEC).